Consider the following 95-residue polypeptide: Large ribosomal subunit protein uL23 (95 aa).

It belongs to the universal ribosomal protein uL23 family. In terms of assembly, part of the 50S ribosomal subunit. Contacts protein L29, and trigger factor when it is bound to the ribosome.

In terms of biological role, one of the early assembly proteins it binds 23S rRNA. One of the proteins that surrounds the polypeptide exit tunnel on the outside of the ribosome. Forms the main docking site for trigger factor binding to the ribosome. The protein is Large ribosomal subunit protein uL23 of Pelotomaculum thermopropionicum (strain DSM 13744 / JCM 10971 / SI).